A 288-amino-acid chain; its full sequence is Homoserine kinase (288 aa).

79–89 is a binding site for ATP; the sequence is PPARGLGSSSA.

Belongs to the GHMP kinase family. Homoserine kinase subfamily.

It is found in the cytoplasm. It catalyses the reaction L-homoserine + ATP = O-phospho-L-homoserine + ADP + H(+). Its pathway is amino-acid biosynthesis; L-threonine biosynthesis; L-threonine from L-aspartate: step 4/5. In terms of biological role, catalyzes the ATP-dependent phosphorylation of L-homoserine to L-homoserine phosphate. In Listeria monocytogenes serotype 4a (strain HCC23), this protein is Homoserine kinase.